The sequence spans 384 residues: 1-deoxy-D-xylulose 5-phosphate reductoisomerase (384 aa).

Positions 11, 12, 13, 14, 38, and 123 each coordinate NADPH. A 1-deoxy-D-xylulose 5-phosphate-binding site is contributed by Lys124. Glu125 contacts NADPH. Mn(2+) is bound at residue Asp148. The 1-deoxy-D-xylulose 5-phosphate site is built by Ser149, Glu150, Ser174, and His197. A Mn(2+)-binding site is contributed by Glu150. An NADPH-binding site is contributed by Gly203. Residues Ser210, Asn215, Lys216, and Glu219 each coordinate 1-deoxy-D-xylulose 5-phosphate. Glu219 lines the Mn(2+) pocket.

The protein belongs to the DXR family. It depends on Mg(2+) as a cofactor. The cofactor is Mn(2+).

It carries out the reaction 2-C-methyl-D-erythritol 4-phosphate + NADP(+) = 1-deoxy-D-xylulose 5-phosphate + NADPH + H(+). It participates in isoprenoid biosynthesis; isopentenyl diphosphate biosynthesis via DXP pathway; isopentenyl diphosphate from 1-deoxy-D-xylulose 5-phosphate: step 1/6. Functionally, catalyzes the NADPH-dependent rearrangement and reduction of 1-deoxy-D-xylulose-5-phosphate (DXP) to 2-C-methyl-D-erythritol 4-phosphate (MEP). This chain is 1-deoxy-D-xylulose 5-phosphate reductoisomerase, found in Halothermothrix orenii (strain H 168 / OCM 544 / DSM 9562).